The sequence spans 339 residues: Methylthioribose-1-phosphate isomerase (339 aa).

Residues 52–54 (RGA), Arg89, and Gln188 contribute to the substrate site. The Proton donor role is filled by Asp229. 239–240 (NK) is a substrate binding site.

The protein belongs to the eIF-2B alpha/beta/delta subunits family. MtnA subfamily.

It carries out the reaction 5-(methylsulfanyl)-alpha-D-ribose 1-phosphate = 5-(methylsulfanyl)-D-ribulose 1-phosphate. It participates in amino-acid biosynthesis; L-methionine biosynthesis via salvage pathway; L-methionine from S-methyl-5-thio-alpha-D-ribose 1-phosphate: step 1/6. Functionally, catalyzes the interconversion of methylthioribose-1-phosphate (MTR-1-P) into methylthioribulose-1-phosphate (MTRu-1-P). This chain is Methylthioribose-1-phosphate isomerase, found in Anaeromyxobacter sp. (strain K).